A 471-amino-acid chain; its full sequence is 3-isopropylmalate dehydratase large subunit (471 aa).

C349, C410, and C413 together coordinate [4Fe-4S] cluster.

This sequence belongs to the aconitase/IPM isomerase family. LeuC type 1 subfamily. As to quaternary structure, heterodimer of LeuC and LeuD. Requires [4Fe-4S] cluster as cofactor.

The enzyme catalyses (2R,3S)-3-isopropylmalate = (2S)-2-isopropylmalate. It functions in the pathway amino-acid biosynthesis; L-leucine biosynthesis; L-leucine from 3-methyl-2-oxobutanoate: step 2/4. In terms of biological role, catalyzes the isomerization between 2-isopropylmalate and 3-isopropylmalate, via the formation of 2-isopropylmaleate. The sequence is that of 3-isopropylmalate dehydratase large subunit from Chromobacterium violaceum (strain ATCC 12472 / DSM 30191 / JCM 1249 / CCUG 213 / NBRC 12614 / NCIMB 9131 / NCTC 9757 / MK).